An 82-amino-acid polypeptide reads, in one-letter code: Endocuticle structural glycoprotein ABD-5 (82 aa).

Pyrrolidone carboxylic acid is present on Q1. Residues 18 to 82 (LGQYNFAYRT…ENGYQPRVQS (65 aa)) enclose the Chitin-binding type R&amp;R domain.

In terms of biological role, component of the soft endocuticle of migratory locust. This chain is Endocuticle structural glycoprotein ABD-5, found in Locusta migratoria (Migratory locust).